Here is an 80-residue protein sequence, read N- to C-terminus: Acyl carrier protein (80 aa).

The Carrier domain maps to 4–79 (EEILQKVCSI…DAVKFIEEKK (76 aa)). S39 carries the post-translational modification O-(pantetheine 4'-phosphoryl)serine.

The protein belongs to the acyl carrier protein (ACP) family. 4'-phosphopantetheine is transferred from CoA to a specific serine of apo-ACP by AcpS. This modification is essential for activity because fatty acids are bound in thioester linkage to the sulfhydryl of the prosthetic group.

The protein localises to the cytoplasm. It functions in the pathway lipid metabolism; fatty acid biosynthesis. Its function is as follows. Carrier of the growing fatty acid chain in fatty acid biosynthesis. The chain is Acyl carrier protein from Prochlorococcus marinus subsp. pastoris (strain CCMP1986 / NIES-2087 / MED4).